Reading from the N-terminus, the 244-residue chain is MSSYIMLVLLLLDIYSSCVDGYLSSPHVGQDPPYLAQQKSVMSSPVALTASSASPVVTDNYVSKCPSGGLCSKLPADCIICALHHNCSYGRPHNYTCRPRAGVHCVSDQGERQQNFTLSLLCRFCFQLDASQYRCSNSSDCMTVSCPRRRYNASCEVLEHVHCLGKRVFQKRLFCNWTGGYKWSTALALSITLGGFGADRFYLGQWREGLGKLFSFGGLGIWTLIDVLLIGVGYVGPADGSLYI.

The signal sequence occupies residues Met-1 to Gly-21. Residues Tyr-22–Asn-176 are Extracellular-facing. 6 N-linked (GlcNAc...) asparagine glycosylation sites follow: Asn-86, Asn-94, Asn-115, Asn-137, Asn-152, and Asn-176. The helical transmembrane segment at Trp-177–Gly-197 threads the bilayer. Positions Gly-180–Val-227 constitute a TM2 domain. Residues Ala-198–Lys-212 are Cytoplasmic-facing. The chain crosses the membrane as a helical span at residues Leu-213–Gly-233. The Extracellular segment spans residues Tyr-234–Ile-244.

It belongs to the TM2 family.

Its subcellular location is the membrane. The protein is TM2 domain-containing protein 3 (tm2d3) of Danio rerio (Zebrafish).